The chain runs to 309 residues: uncharacterized protein (309 aa).

The region spanning 1–60 (MKPLLDVLMILDALEKEGSFAAASAKLYKTPSALSYTVHKLESDLNIQLLDRSGHRAKFT) is the HTH lysR-type domain. Residues 20 to 39 (FAAASAKLYKTPSALSYTVH) constitute a DNA-binding region (H-T-H motif).

Belongs to the LysR transcriptional regulatory family.

This is an uncharacterized protein from Escherichia coli (strain K12).